We begin with the raw amino-acid sequence, 130 residues long: Small ribosomal subunit protein uS11 (130 aa).

Belongs to the universal ribosomal protein uS11 family. Part of the 30S ribosomal subunit. Interacts with proteins S7 and S18. Binds to IF-3.

Its function is as follows. Located on the platform of the 30S subunit, it bridges several disparate RNA helices of the 16S rRNA. Forms part of the Shine-Dalgarno cleft in the 70S ribosome. This is Small ribosomal subunit protein uS11 from Thermosynechococcus vestitus (strain NIES-2133 / IAM M-273 / BP-1).